The sequence spans 97 residues: uncharacterized protein (97 aa).

The interval 72–97 (TVERKRSEHTNSRKKDPSAYTWSDVK) is disordered. Basic and acidic residues predominate over residues 73-88 (VERKRSEHTNSRKKDP).

The protein belongs to the chlamydial CPn_0121/CT_031/TC_0300 family.

This is an uncharacterized protein from Chlamydia pneumoniae (Chlamydophila pneumoniae).